The following is a 149-amino-acid chain: Probable microsomal glutathione S-transferase (149 aa).

2 consecutive transmembrane segments (helical) span residues Ser-7–Trp-27 and Leu-123–Leu-143.

Belongs to the MAPEG family.

The protein resides in the membrane. The catalysed reaction is RX + glutathione = an S-substituted glutathione + a halide anion + H(+). Its function is as follows. May perform the conjugation of reduced glutathione to electrophiles. The sequence is that of Probable microsomal glutathione S-transferase (mgst) from Dictyostelium discoideum (Social amoeba).